A 181-amino-acid chain; its full sequence is MICGIDEVGRGCIFGPILSAAVVFKKKPSFIKELDDSKKLKKEKREYLSSLILENSYYAFAEISNITIEKINIHNASLLAMQTAYENLKLNCSLVLVDGKFVPKITAKNVKAIIKGDSIIDEIKAASIIAKVKRDKLMDKYDKIYPLYLLKKNKGYPTKEHKNAIKKYGVLSLHRKNFKLI.

The RNase H type-2 domain occupies 1–181 (MICGIDEVGR…SLHRKNFKLI (181 aa)). Aspartate 6, glutamate 7, and aspartate 98 together coordinate a divalent metal cation.

The protein belongs to the RNase HII family. It depends on Mn(2+) as a cofactor. Requires Mg(2+) as cofactor.

The protein resides in the cytoplasm. The enzyme catalyses Endonucleolytic cleavage to 5'-phosphomonoester.. In terms of biological role, endonuclease that specifically degrades the RNA of RNA-DNA hybrids. The sequence is that of Ribonuclease HII (rnhB) from Borreliella burgdorferi (strain ATCC 35210 / DSM 4680 / CIP 102532 / B31) (Borrelia burgdorferi).